The primary structure comprises 396 residues: Odorant receptor 49a (396 aa).

Residues 1–6 (MEKLRS) lie on the Cytoplasmic side of the membrane. A helical membrane pass occupies residues 7 to 27 (YEDFIFMANMMFKTLGYDLFH). Over 28–34 (TPKPWWR) the chain is Extracellular. A helical membrane pass occupies residues 35–55 (YLLVRGYFVLCTISNFYEASM). At 56-70 (VTTRIIEWESLAGSP) the chain is on the cytoplasmic side. A helical transmembrane segment spans residues 71 to 91 (SKIMRQGLHFFYMLSSQLKFI). The Extracellular portion of the chain corresponds to 92–141 (TFMINRKRLLQLSHRLKELYPHKEQNQRKYEVNKYYLSCSTRNVLYVYYF). The chain crosses the membrane as a helical span at residues 142–162 (VMVVMALEPLVQSCIMYLIGF). Topologically, residues 163 to 209 (GKADFTYKRIFPTRLTFDSEKPLGYVLAYVIDFTYSQFIVNVSLGTD) are cytoplasmic. The helical transmembrane segment at 210 to 230 (LWMMCVSSQISMHLGYLANML) threads the bilayer. Residues 231-266 (ASIRPSPETEQQDCDFLASIIKRHQLMIRLQKDVNY) are Extracellular-facing. The helical transmembrane segment at 267–287 (VFGLLLASNLFTTSCLLCCMA) threads the bilayer. The Cytoplasmic segment spans residues 288-296 (YYTVVEGFN). Residues 297-317 (WEGISYMMLFASVAAQFYVVS) form a helical membrane-spanning segment. The Extracellular portion of the chain corresponds to 318 to 396 (SHGQMLIDLS…FAVIRQTVEK (79 aa)).

It belongs to the insect chemoreceptor superfamily. Heteromeric odorant receptor channel (TC 1.A.69) family. Or49a subfamily. In terms of assembly, interacts with Orco. Complexes exist early in the endomembrane system in olfactory sensory neurons (OSNs), coupling these complexes to the conserved ciliary trafficking pathway.

It localises to the cell membrane. Functionally, odorant receptor which mediates acceptance or avoidance behavior, depending on its substrates. The odorant receptor repertoire encodes a large collection of odor stimuli that vary widely in identity, intensity, and duration. May form a complex with Orco to form odorant-sensing units, providing sensitive and prolonged odorant signaling and calcium permeability. Involved in the behavioral responses to butanol and 2-heptanone. This Drosophila melanogaster (Fruit fly) protein is Odorant receptor 49a (Or49a).